The primary structure comprises 159 residues: Ribosomal RNA large subunit methyltransferase H (159 aa).

S-adenosyl-L-methionine is bound by residues leucine 76, glycine 108, and 127–132; that span reads FGLLTL.

This sequence belongs to the RNA methyltransferase RlmH family. In terms of assembly, homodimer.

The protein localises to the cytoplasm. It catalyses the reaction pseudouridine(1915) in 23S rRNA + S-adenosyl-L-methionine = N(3)-methylpseudouridine(1915) in 23S rRNA + S-adenosyl-L-homocysteine + H(+). In terms of biological role, specifically methylates the pseudouridine at position 1915 (m3Psi1915) in 23S rRNA. This is Ribosomal RNA large subunit methyltransferase H from Streptococcus pyogenes serotype M12 (strain MGAS2096).